The following is a 161-amino-acid chain: MPSFDIVSKTDFAEIDNALQNVTREISQRYDFKGAHCTVERKDQELTINADDDLKLKQMHELLQGHLARRNVEAGVLDYKEPEKAAGQSVRQKVAIRDGLDKELAKRIVKDIKGSGLKVQVAIQGDELRVSGKKRDDLQAVIQFVKGLKIEQPLQYENFRD.

It belongs to the YajQ family.

Nucleotide-binding protein. This Parvibaculum lavamentivorans (strain DS-1 / DSM 13023 / NCIMB 13966) protein is Nucleotide-binding protein Plav_2177.